Reading from the N-terminus, the 701-residue chain is Elongation factor G (701 aa).

Residues 8–291 enclose the tr-type G domain; the sequence is GRYRNIGIVA…AVIDYLPAPT (284 aa). GTP-binding positions include 17–24, 89–93, and 143–146; these read AHVDAGKT, DTPGH, and NKMD.

This sequence belongs to the TRAFAC class translation factor GTPase superfamily. Classic translation factor GTPase family. EF-G/EF-2 subfamily.

Its subcellular location is the cytoplasm. In terms of biological role, catalyzes the GTP-dependent ribosomal translocation step during translation elongation. During this step, the ribosome changes from the pre-translocational (PRE) to the post-translocational (POST) state as the newly formed A-site-bound peptidyl-tRNA and P-site-bound deacylated tRNA move to the P and E sites, respectively. Catalyzes the coordinated movement of the two tRNA molecules, the mRNA and conformational changes in the ribosome. The protein is Elongation factor G of Pseudomonas syringae pv. syringae (strain B728a).